The chain runs to 511 residues: Glycerol kinase (511 aa).

Thr-11 contacts ADP. ATP contacts are provided by Thr-11, Ser-12, and Ser-13. Thr-11 is a sn-glycerol 3-phosphate binding site. Arg-15 is an ADP binding site. Arg-81, Glu-82, Tyr-133, and Asp-242 together coordinate sn-glycerol 3-phosphate. Glycerol-binding residues include Arg-81, Glu-82, Tyr-133, Asp-242, and Gln-243. ADP-binding residues include Thr-264 and Gly-321. Thr-264, Gly-321, Gln-325, and Gly-426 together coordinate ATP. Positions 426 and 430 each coordinate ADP.

The protein belongs to the FGGY kinase family.

The enzyme catalyses glycerol + ATP = sn-glycerol 3-phosphate + ADP + H(+). It participates in polyol metabolism; glycerol degradation via glycerol kinase pathway; sn-glycerol 3-phosphate from glycerol: step 1/1. Inhibited by fructose 1,6-bisphosphate (FBP). Key enzyme in the regulation of glycerol uptake and metabolism. Catalyzes the phosphorylation of glycerol to yield sn-glycerol 3-phosphate. In Verminephrobacter eiseniae (strain EF01-2), this protein is Glycerol kinase.